The chain runs to 137 residues: Basic phospholipase A2 beta-bungarotoxin A5 chain (137 aa).

The signal sequence occupies residues 1-9; the sequence is AVCVSLLGA. The propeptide occupies 10–17; it reads ANIPPQHL. Intrachain disulfides connect C44/C136, C46/C62, C61/C117, C68/C110, C78/C103, and C96/C108. Positions 45, 47, and 49 each coordinate Ca(2+). The active site involves H65. D66 is a Ca(2+) binding site. The active site involves D111.

Belongs to the phospholipase A2 family. Group I subfamily. D49 sub-subfamily. Heterodimer; disulfide-linked. The A chains have phospholipase A2 activity and the B chains show homology with the basic protease inhibitors. The cofactor is Ca(2+). As to expression, expressed by the venom gland.

The protein resides in the secreted. The catalysed reaction is a 1,2-diacyl-sn-glycero-3-phosphocholine + H2O = a 1-acyl-sn-glycero-3-phosphocholine + a fatty acid + H(+). In terms of biological role, snake venom phospholipase A2 (PLA2) that inhibits neuromuscular transmission by blocking acetylcholine release from the nerve termini. PLA2 catalyzes the calcium-dependent hydrolysis of the 2-acyl groups in 3-sn-phosphoglycerides. The protein is Basic phospholipase A2 beta-bungarotoxin A5 chain of Bungarus multicinctus (Many-banded krait).